A 92-amino-acid polypeptide reads, in one-letter code: Small ribosomal subunit protein uS19 (92 aa).

It belongs to the universal ribosomal protein uS19 family.

In terms of biological role, protein S19 forms a complex with S13 that binds strongly to the 16S ribosomal RNA. In Bifidobacterium animalis subsp. lactis (strain AD011), this protein is Small ribosomal subunit protein uS19.